The chain runs to 87 residues: Small ribosomal subunit protein uS17 (87 aa).

It belongs to the universal ribosomal protein uS17 family. Part of the 30S ribosomal subunit.

In terms of biological role, one of the primary rRNA binding proteins, it binds specifically to the 5'-end of 16S ribosomal RNA. In Neisseria meningitidis serogroup C (strain 053442), this protein is Small ribosomal subunit protein uS17.